The sequence spans 198 residues: MHYPEPISKLIDSFMKLPGIGPKTAVRLAFFVLDMKEDDVLGFAKALVNAKRDLAYCSVCGHITDRDPCYICDDSHRDQSVVCVVQEPKDVIAMEKMKEYQGVYHVLRGAISPMEGIGPEDINIPQLLKRLQDETVQEVILATNPNIEGEATAMYISRLLKPTGIKVTRIAHGLPVGGDLEYADEVTLSKALEGRREI.

The C4-type zinc-finger motif lies at 57–72; sequence CSVCGHITDRDPCYIC. The Toprim domain occupies 80–175; sequence SVVCVVQEPK…KVTRIAHGLP (96 aa).

Belongs to the RecR family.

May play a role in DNA repair. It seems to be involved in an RecBC-independent recombinational process of DNA repair. It may act with RecF and RecO. The protein is Recombination protein RecR of Bacillus mycoides (strain KBAB4) (Bacillus weihenstephanensis).